Consider the following 163-residue polypeptide: F-box protein At2g35280 (163 aa).

The F-box domain maps to 8–57 (ISRLEALPQDLLREIVAKIGVKSAEDYHNCILSCKELGASANDERVLKTL).

The polypeptide is F-box protein At2g35280 (Arabidopsis thaliana (Mouse-ear cress)).